Consider the following 327-residue polypeptide: Lipoyl synthase (327 aa).

[4Fe-4S] cluster is bound by residues cysteine 72, cysteine 77, cysteine 83, cysteine 98, cysteine 102, cysteine 105, and serine 313. The Radical SAM core domain maps to 83–302 (CWSHGTATIM…RRVGLEKGFL (220 aa)).

This sequence belongs to the radical SAM superfamily. Lipoyl synthase family. [4Fe-4S] cluster serves as cofactor.

It localises to the cytoplasm. It carries out the reaction [[Fe-S] cluster scaffold protein carrying a second [4Fe-4S](2+) cluster] + N(6)-octanoyl-L-lysyl-[protein] + 2 oxidized [2Fe-2S]-[ferredoxin] + 2 S-adenosyl-L-methionine + 4 H(+) = [[Fe-S] cluster scaffold protein] + N(6)-[(R)-dihydrolipoyl]-L-lysyl-[protein] + 4 Fe(3+) + 2 hydrogen sulfide + 2 5'-deoxyadenosine + 2 L-methionine + 2 reduced [2Fe-2S]-[ferredoxin]. The protein operates within protein modification; protein lipoylation via endogenous pathway; protein N(6)-(lipoyl)lysine from octanoyl-[acyl-carrier-protein]: step 2/2. Its function is as follows. Catalyzes the radical-mediated insertion of two sulfur atoms into the C-6 and C-8 positions of the octanoyl moiety bound to the lipoyl domains of lipoate-dependent enzymes, thereby converting the octanoylated domains into lipoylated derivatives. The polypeptide is Lipoyl synthase (Francisella philomiragia subsp. philomiragia (strain ATCC 25017 / CCUG 19701 / FSC 153 / O#319-036)).